The primary structure comprises 588 residues: L-fucose isomerase (588 aa).

Active-site proton acceptor residues include E335 and D359. E335, D359, and H525 together coordinate Mn(2+).

The protein belongs to the L-fucose isomerase family. The cofactor is Mn(2+).

The protein resides in the cytoplasm. It catalyses the reaction L-fucose = L-fuculose. Its pathway is carbohydrate degradation; L-fucose degradation; L-lactaldehyde and glycerone phosphate from L-fucose: step 1/3. Its function is as follows. Converts the aldose L-fucose into the corresponding ketose L-fuculose. This is L-fucose isomerase from Streptococcus pneumoniae serotype 4 (strain ATCC BAA-334 / TIGR4).